The following is a 182-amino-acid chain: Dual-action ribosomal maturation protein DarP (182 aa).

The segment at 1–20 (MNKQPEEWQDPQSLQQQDDE) is disordered.

The protein belongs to the DarP family.

It is found in the cytoplasm. Its function is as follows. Member of a network of 50S ribosomal subunit biogenesis factors which assembles along the 30S-50S interface, preventing incorrect 23S rRNA structures from forming. Promotes peptidyl transferase center (PTC) maturation. The protein is Dual-action ribosomal maturation protein DarP of Sodalis glossinidius (strain morsitans).